The following is a 171-amino-acid chain: MAAEEKDPLSYFAAYGSSSSSDSESSDEEKETENAKNRAAKRPFPTEAKKLPGPDELFRSVSRPAFLYNPLNKQIDWESRVKRAPEEPAKEFKIWKTNAVPPPESYQVAEKKAPPPELDMAIKWSNVYQDNGDDAPHANQAKCLPEEEAQEDSPPSDDEQEKAFATKKRKV.

Disordered regions lie at residues 1 to 56 (MAAE…GPDE) and 126 to 171 (NVYQ…KRKV). The segment covering 47–56 (EAKKLPGPDE) has biased composition (basic and acidic residues). Residues 146–160 (EEEAQEDSPPSDDEQ) show a composition bias toward acidic residues.

This sequence belongs to the UPF0690 family.

The polypeptide is UPF0690 protein C1orf52 homolog A (Xenopus laevis (African clawed frog)).